Here is a 399-residue protein sequence, read N- to C-terminus: S-adenosylmethionine synthase (399 aa).

His-16 provides a ligand contact to ATP. Residue Asp-18 participates in Mg(2+) binding. Glu-44 contributes to the K(+) binding site. Residues Glu-57 and Gln-100 each coordinate L-methionine. Residues 100-110 (QSSDIAQGVNE) are flexible loop. Residues 177-179 (DAK), 244-245 (RF), Asp-253, 259-260 (RK), Ala-276, and Lys-280 each bind ATP. Asp-253 serves as a coordination point for L-methionine. Lys-284 provides a ligand contact to L-methionine.

The protein belongs to the AdoMet synthase family. In terms of assembly, homotetramer; dimer of dimers. Requires Mg(2+) as cofactor. It depends on K(+) as a cofactor.

It is found in the cytoplasm. The catalysed reaction is L-methionine + ATP + H2O = S-adenosyl-L-methionine + phosphate + diphosphate. It participates in amino-acid biosynthesis; S-adenosyl-L-methionine biosynthesis; S-adenosyl-L-methionine from L-methionine: step 1/1. Catalyzes the formation of S-adenosylmethionine (AdoMet) from methionine and ATP. The overall synthetic reaction is composed of two sequential steps, AdoMet formation and the subsequent tripolyphosphate hydrolysis which occurs prior to release of AdoMet from the enzyme. In Lactococcus lactis subsp. cremoris (strain MG1363), this protein is S-adenosylmethionine synthase.